Consider the following 520-residue polypeptide: Keratin, type II cytoskeletal 72 (520 aa).

The head stretch occupies residues 1 to 133 (MSRQLTLYPG…DPEIQKVRAQ (133 aa)). The coil 1A stretch occupies residues 134–169 (EREQIKALNNKFASFIDKVRFLEQQNQVLETKWELL). The IF rod domain occupies 134–447 (EREQIKALNN…KLLESEESRM (314 aa)). The linker 1 stretch occupies residues 170 to 188 (QQLDQNNSRRSLEPVHESY). Positions 189 to 280 (ISNLQKQLEI…VLFEGEIAQM (92 aa)) are coil 1B. The segment at 281-304 (QSHISDTSVILSMDNNRQLDLDSI) is linker 12. Residues 305–443 (LAEVRAQYEE…ATYRKLLESE (139 aa)) are coil 2. The tail stretch occupies residues 444–520 (ESRMAGEYPS…SSCVSKKASR (77 aa)). The disordered stretch occupies residues 495 to 520 (GSCGSELKDPPAKTSASSCVSKKASR).

It belongs to the intermediate filament family. As to quaternary structure, heterotetramer of two type I and two type II keratins.

Its function is as follows. Has a role in hair formation. Specific component of keratin intermediate filaments in the inner root sheath (IRS) of the hair follicle. This is Keratin, type II cytoskeletal 72 (Krt72) from Rattus norvegicus (Rat).